Here is a 927-residue protein sequence, read N- to C-terminus: Roc-COR-CHAT protease (927 aa).

LRR repeat units lie at residues 38–61 (AGQV…TEAQ), 83–107 (LPHL…GFRS), 109–125 (QQVY…VFEG), and 127–151 (CPAL…GFRA). Residues 152–170 (LKYIYATNNVLQKITFNRS) form an LRR 5 region. LRR repeat units lie at residues 171 to 194 (MRLL…LSEI) and 195 to 217 (ETME…IWDR). The region spanning 436–623 (EWLGVKEDLN…ELRWKKGVVL (188 aa)) is the COR domain. Residues His-796 and Cys-840 contribute to the active site.

Functionally, a dedicated protease for gasdermin bGSDM; cleaves the bGSDM precursor, releasing the pore-forming moiety, which integrates into the membrane and triggers cell death. Probably involved in defense against bacteriophages. Expression of bGSDM and this neighboring protease is highly toxic in E.coli. Cells expressing the gene pair stop dividing and lose membrane integrity. Both proteins are required to kill E.coli. The bGSDM recognition site is larger than the 8 residues surrounding the cleavage site; replacement of the endogenous recognition site by the Runella site (NRVLGENM) in a number of other bGSDMs is not sufficient for them to be cleaved. This is Roc-COR-CHAT protease from Runella zeae (strain ATCC BAA-293 / DSM 19591 / LMG 21438 / NS12).